We begin with the raw amino-acid sequence, 927 residues long: Sodium/calcium exchanger 3 (927 aa).

The N-terminal stretch at 1-30 (MAWLRLQPLTSAFLHFGLVTFVLFLNGLRA) is a signal peptide. Topologically, residues 31 to 73 (EAGGSGDVPSTGQNNESCSGSSDCKEGVILPIWYPENPSLGDK) are extracellular. An N-linked (GlcNAc...) asparagine glycan is attached at Asn-45. Residues 74-94 (IARVIVYFVALIYMFLGVSII) traverse the membrane as a helical segment. Residues 95–147 (ADRFMASIEVITSQEREVTIKKPNGETSTTTIRVWNETVSNLTLMALGSSAPE) are Cytoplasmic-facing. One copy of the Alpha-1 repeat lies at 140–180 (ALGSSAPEILLSLIEVCGHGFIAGDLGPSTIVGSAAFNMFI). The chain crosses the membrane as a helical span at residues 148–168 (ILLSLIEVCGHGFIAGDLGPS). A topological domain (extracellular) is located at residue Thr-169. A helical membrane pass occupies residues 170-190 (IVGSAAFNMFIIIGICVYVIP). Residues 191 to 202 (DGETRKIKHLRV) lie on the Cytoplasmic side of the membrane. The helical transmembrane segment at 203–223 (FFITAAWSIFAYIWLYMILAV) threads the bilayer. Topologically, residues 224-230 (FSPGVVQ) are extracellular. The helical transmembrane segment at 231–251 (VWEGLLTLFFFPVCVLLAWVA) threads the bilayer. Residues 252 to 726 (DKRLLFYKYM…DESGEERLPS (475 aa)) are Cytoplasmic-facing. The putative calmodulin-binding region stretch occupies residues 253-272 (KRLLFYKYMHKKYRTDKHRG). 2 Calx-beta domains span residues 386–485 (VHTD…VRLS) and 519–619 (ATVT…IALG). Residues Glu-409, Asp-445, Asp-470, Asp-471, Ile-473, Glu-475, Glu-478, Asp-525, Asp-526, Asp-527, Glu-543, Asp-579, Glu-606, Glu-607, and Glu-672 each contribute to the Ca(2+) site. The chain crosses the membrane as a helical span at residues 727-747 (CFDYVMHFLTVFWKVLFACVP). Residues 748–754 (PTEYCHG) are Extracellular-facing. The chain crosses the membrane as a helical span at residues 755-775 (WACFAVSILIIGMLTAIIGDL). The Cytoplasmic portion of the chain corresponds to 776 to 778 (ASH). The helical transmembrane segment at 779–799 (FGCTIGLKDSVTAVVFVAFGT) threads the bilayer. One copy of the Alpha-2 repeat lies at 796 to 832 (AFGTSVPDTFASKAAALQDVYADASIGNVTGSNAVNV). At 800–828 (SVPDTFASKAAALQDVYADASIGNVTGSN) the chain is on the extracellular side. Residue Asn-823 is glycosylated (N-linked (GlcNAc...) asparagine). A helical membrane pass occupies residues 829-849 (AVNVFLGIGLAWSVAAIYWAL). Over 850–860 (QGQEFHVSAGT) the chain is Cytoplasmic. A helical transmembrane segment spans residues 861–881 (LAFSVTLFTIFAFVCISVLLY). Residues 882–903 (RRRPHLGGELGGPRGCKLATTW) lie on the Extracellular side of the membrane. Residues 904 to 924 (LFVSLWLLYILFATLEAYCYI) traverse the membrane as a helical segment. Over 925-927 (KGF) the chain is Cytoplasmic.

This sequence belongs to the Ca(2+):cation antiporter (CaCA) (TC 2.A.19) family. SLC8 subfamily. As to quaternary structure, interacts with AKAP1. Isoform 2 is expressed in brain and skeletal muscle. Isoform 3 is expressed in excitable cells of brain, retina and skeletal muscle. Isoform 4 is expressed in skeletal muscle.

Its subcellular location is the cell membrane. It is found in the perikaryon. The protein localises to the cell projection. It localises to the dendrite. The protein resides in the dendritic spine. Its subcellular location is the sarcolemma. It is found in the cytoplasm. The protein localises to the sarcoplasm. It localises to the cell junction. The protein resides in the mitochondrion outer membrane. Its subcellular location is the perinuclear region. It is found in the endoplasmic reticulum membrane. It carries out the reaction Ca(2+)(in) + 3 Na(+)(out) = Ca(2+)(out) + 3 Na(+)(in). Its activity is regulated as follows. Calcium transport is down-regulated by Na(+) and stimulated by Ca(2+). In terms of biological role, mediates the electrogenic exchange of Ca(2+) against Na(+) ions across the cell membrane, and thereby contributes to the regulation of cytoplasmic Ca(2+) levels and Ca(2+)-dependent cellular processes. Contributes to cellular Ca(2+) homeostasis in excitable cells, both in muscle and in brain. In a first phase, voltage-gated channels mediate the rapid increase of cytoplasmic Ca(2+) levels due to release of Ca(2+) stores from the endoplasmic reticulum. SLC8A3 mediates the export of Ca(2+) from the cell during the next phase, so that cytoplasmic Ca(2+) levels rapidly return to baseline. Contributes to Ca(2+) transport during excitation-contraction coupling in muscle. In neurons, contributes to the rapid decrease of cytoplasmic Ca(2+) levels back to baseline after neuronal activation, and thereby contributes to modulate synaptic plasticity, learning and memory. Required for normal oligodendrocyte differentiation and for normal myelination. Mediates Ca(2+) efflux from mitochondria and contributes to mitochondrial Ca(2+) ion homeostasis. The protein is Sodium/calcium exchanger 3 (SLC8A3) of Homo sapiens (Human).